Here is a 508-residue protein sequence, read N- to C-terminus: DASH complex subunit ASK1 (508 aa).

2 disordered regions span residues 86–138 (LVDG…TLSS) and 150–355 (SRAA…QLRS). Positions 116 to 138 (EPSQYTPRPQTSAGGHDTTTLSS) are enriched in polar residues. A compositionally biased stretch (basic and acidic residues) spans 161 to 175 (QHHDDSSVLTDRDGD). Residues 201 to 213 (DEMDIDMDEEDSE) show a composition bias toward acidic residues. Positions 229-238 (RYYDDDHGFE) are enriched in basic and acidic residues. Over residues 239 to 258 (QGEEEEDEEEEEEEEEEEEG) the composition is skewed to acidic residues. The span at 326-338 (IKQEDTEKKRPLW) shows a compositional bias: basic and acidic residues.

This sequence belongs to the DASH complex ASK1 family. In terms of assembly, component of the DASH complex consisting of ASK1, DAD1, DAD2, DAD3, DAD4, DAM1, DUO1, HSK3, SPC19 and SPC34, with a stoichiometry of one copy of each subunit per complex. Multiple DASH complexes oligomerize to form a ring that encircles spindle microtubules and organizes the rod-like NDC80 complexes of the outer kinetochore. On cytoplasmic microtubules, DASH complexes appear to form patches instead of rings.

The protein resides in the chromosome. The protein localises to the centromere. It localises to the kinetochore. Its subcellular location is the cytoplasm. It is found in the cytoskeleton. The protein resides in the spindle. The protein localises to the nucleus. Functionally, component of the DASH complex that connects microtubules with kinetochores and couples microtubule depolymerisation to chromosome movement; it is involved in retrieving kinetochores to the spindle poles before their re-orientation on the spindle in early mitosis and allows microtubule depolymerization to pull chromosomes apart and resist detachment during anaphase. Kinetochores, consisting of a centromere-associated inner segment and a microtubule-contacting outer segment, play a crucial role in chromosome segregation by mediating the physical connection between centromeric DNA and microtubules. Kinetochores also serve as an input point for the spindle assembly checkpoint, which delays anaphase until all chromosomes have bioriented on the mitotic spindle. This Chaetomium thermophilum (strain DSM 1495 / CBS 144.50 / IMI 039719) (Thermochaetoides thermophila) protein is DASH complex subunit ASK1.